The sequence spans 349 residues: AA9 family lytic polysaccharide monooxygenase A (349 aa).

The first 19 residues, 1–19, serve as a signal peptide directing secretion; that stretch reads MKSTFGLLALAAAAKLVSA. Cu(2+)-binding residues include His20 and His102. A disulfide bridge links Cys62 with Cys183. His169 lines the O2 pocket. Tyr180 provides a ligand contact to Cu(2+). The segment at 233-304 is disordered; sequence DGSSSGSSGS…SGSNSGSDSC (72 aa). Composition is skewed to low complexity over residues 234–262 and 269–304; these read GSSS…AVPT and TSAT…SDSC. Residues 311 to 347 form the CBM1 domain; it reads GSVKIYGQCGGQNYSGPTSCEAGLICKEWNPYYHQCV. Residue Asn323 is glycosylated (N-linked (GlcNAc...) asparagine).

This sequence belongs to the polysaccharide monooxygenase AA9 family. The cofactor is Cu(2+).

It localises to the secreted. It catalyses the reaction [(1-&gt;4)-beta-D-glucosyl]n+m + reduced acceptor + O2 = 4-dehydro-beta-D-glucosyl-[(1-&gt;4)-beta-D-glucosyl]n-1 + [(1-&gt;4)-beta-D-glucosyl]m + acceptor + H2O.. Lytic polysaccharide monooxygenase (LPMO) that depolymerizes crystalline and amorphous polysaccharides via the oxidation of scissile alpha- or beta-(1-4)-glycosidic bonds, yielding C4 oxidation products. Catalysis by LPMOs requires the reduction of the active-site copper from Cu(II) to Cu(I) by a reducing agent and H(2)O(2) or O(2) as a cosubstrate. The sequence is that of AA9 family lytic polysaccharide monooxygenase A (eglD) from Aspergillus fumigatus (strain CBS 144.89 / FGSC A1163 / CEA10) (Neosartorya fumigata).